The primary structure comprises 443 residues: Histidine--tRNA ligase (443 aa).

Residues 1 to 20 (MTESEKKQQKPQKAKAEKFK) are compositionally biased toward basic and acidic residues. The interval 1–21 (MTESEKKQQKPQKAKAEKFKA) is disordered.

This sequence belongs to the class-II aminoacyl-tRNA synthetase family. Homodimer.

It is found in the cytoplasm. It carries out the reaction tRNA(His) + L-histidine + ATP = L-histidyl-tRNA(His) + AMP + diphosphate + H(+). The protein is Histidine--tRNA ligase of Corynebacterium jeikeium (strain K411).